Here is a 469-residue protein sequence, read N- to C-terminus: MDHQAHGAGEKKGIMEKIKEKLPGGHGDHKETAGAHGHAGTVTHGAPATGGAYGQEGHTGTTGTGLHGAHAGEKKGVMENIKDKLPGGHADHQQTGGTYGQQGHTGTATHGTLATGGTYGQQGHTGTAMHGTPATNGTYGEHGHTGTATGGSYGEQRHTGVTGTGTHDIGEKKSLMENIKEKLPGGHGDNQQTAGTYGQQGHFATGTHGTPATGGTYGEQGHAGVTGTGTHGTGEKKGLMENIKDKLPGGHGDHQQTGGTYGQQGHTGAATHGTPAGGGTYEQHGHTGMTGTGTHGTGGKKGVMENIKDKLPGGHSDNQQTGGAYEQQGHTGAATHGTPASGGTYEQHGHTGMTGTGTHGTGEKKAVMENIKDKLPGGHGDHQQTGGAYGQQGHTGTATHGTPAGGGTYEQHGNTGMTGTETHGTTATGGTHGQHGHTGTTGTGTHGTDGVGEKKSLMDKIKDKLPGQH.

A run of 21 repeats spans residues 9–31 (GEKK…DHKE), 49–62 (TGGA…TGTT), 72–94 (GEKK…DHQQ), 95–108 (TGGT…TGTA), 115–128 (TGGT…TGTA), 135–148 (TNGT…TGTA), 149–162 (TGGS…TGVT), 170–192 (GEKK…DNQQ), 193–206 (TAGT…FATG), 213–226 (TGGT…AGVT), 234–256 (GEKK…DHQQ), 257–270 (TGGT…TGAA), 277–290 (GGGT…TGMT), 298–320 (GGKK…DNQQ), 321–334 (TGGA…TGAA), 341–354 (SGGT…TGMT), 362–384 (GEKK…DHQQ), 385–398 (TGGA…TGTA), 405–418 (GGGT…TGMT), 428–441 (TGGT…TGTT), and 452–469 (GEKK…PGQH). Residues 9 to 390 (GEKKGIMEKI…DHQQTGGAYG (382 aa)) are 7 X 23 AA approximate repeats. The 14 X 14 AA approximate repeats stretch occupies residues 49-441 (TGGAYGQEGH…HGQHGHTGTT (393 aa)). Residues 87-112 (GGHADHQQTGGTYGQQGHTGTATHGT) are disordered. Over residues 93–112 (QQTGGTYGQQGHTGTATHGT) the composition is skewed to low complexity. Residues 203-214 (FATGTHGTPATG) show a composition bias toward low complexity. Residues 203-469 (FATGTHGTPA…KIKDKLPGQH (267 aa)) are disordered. A compositionally biased stretch (basic and acidic residues) spans 233–254 (TGEKKGLMENIKDKLPGGHGDH). Over residues 255 to 274 (QQTGGTYGQQGHTGAATHGT) the composition is skewed to low complexity. The segment covering 288 to 301 (GMTGTGTHGTGGKK) has biased composition (gly residues). Residues 302–312 (GVMENIKDKLP) are compositionally biased toward basic and acidic residues. Residues 361 to 382 (TGEKKAVMENIKDKLPGGHGDH) show a composition bias toward basic and acidic residues. Composition is skewed to low complexity over residues 383-402 (QQTG…THGT) and 412-429 (HGNT…TATG). Over residues 439 to 450 (GTTGTGTHGTDG) the composition is skewed to gly residues. The segment covering 451–469 (VGEKKSLMDKIKDKLPGQH) has biased composition (basic and acidic residues).

This sequence belongs to the plant dehydrin family.

May reduce intracellular freezing damage during winter by hydrogen-bonding to the lattice of the nascent ice crystals, thus modifying the structure and/or propagation of ice crystals. This chain is Cold shock protein CS66 (CS66), found in Triticum aestivum (Wheat).